A 292-amino-acid polypeptide reads, in one-letter code: Proteasome subunit beta (292 aa).

The propeptide at Met1 to Gly62 is removed in mature form; by autocatalysis. Thr63 functions as the Nucleophile in the catalytic mechanism.

It belongs to the peptidase T1B family. The 20S proteasome core is composed of 14 alpha and 14 beta subunits that assemble into four stacked heptameric rings, resulting in a barrel-shaped structure. The two inner rings, each composed of seven catalytic beta subunits, are sandwiched by two outer rings, each composed of seven alpha subunits. The catalytic chamber with the active sites is on the inside of the barrel. Has a gated structure, the ends of the cylinder being occluded by the N-termini of the alpha-subunits. Is capped by the proteasome-associated ATPase, ARC.

The protein resides in the cytoplasm. It carries out the reaction Cleavage of peptide bonds with very broad specificity.. The protein operates within protein degradation; proteasomal Pup-dependent pathway. With respect to regulation, the formation of the proteasomal ATPase ARC-20S proteasome complex, likely via the docking of the C-termini of ARC into the intersubunit pockets in the alpha-rings, may trigger opening of the gate for substrate entry. Interconversion between the open-gate and close-gate conformations leads to a dynamic regulation of the 20S proteasome proteolysis activity. Functionally, component of the proteasome core, a large protease complex with broad specificity involved in protein degradation. This is Proteasome subunit beta from Gordonia bronchialis (strain ATCC 25592 / DSM 43247 / BCRC 13721 / JCM 3198 / KCTC 3076 / NBRC 16047 / NCTC 10667) (Rhodococcus bronchialis).